The following is a 215-amino-acid chain: MADLSPAPALREGGPRAHRPSAPSPPPRSRSTSEPEEAELSLSLARTKTRSYGSTASVRAPLGARVIERHVEHRVRAGDTLQGIALKYGVTMEQIKRANKLFTNDCIFLKKTLSIPILSEKPLLFNGLNSIDSPESETVDSSFCQEEEPVVSEEELPPPSPQDPDPKPAQPEEVSARDFLQRLDLQIKLSTQAARKLKEESRDEESPYAASLYHS.

The interval 1-40 is disordered; it reads MADLSPAPALREGGPRAHRPSAPSPPPRSRSTSEPEEAEL. N-acetylalanine is present on Ala-2. 4 positions are modified to phosphoserine: Ser-5, Ser-24, Ser-33, and Ser-57. In terms of domain architecture, LysM spans 71 to 115; it reads VEHRVRAGDTLQGIALKYGVTMEQIKRANKLFTNDCIFLKKTLSI. 2 disordered regions span residues 135–176 and 195–215; these read ESET…EVSA and RKLK…LYHS. A compositionally biased stretch (acidic residues) spans 145–156; sequence QEEEPVVSEEEL. Over residues 157–169 the composition is skewed to pro residues; sequence PPPSPQDPDPKPA. The segment covering 196–205 has biased composition (basic and acidic residues); sequence KLKEESRDEE.

The polypeptide is LysM and putative peptidoglycan-binding domain-containing protein 2 (Lysmd2) (Mus musculus (Mouse)).